The chain runs to 540 residues: Aquaporin-5 (540 aa).

A disordered region spans residues 1-224; it reads MSGEGTDLPT…ESIDGYNYES (224 aa). At 1–263 the chain is on the cytoplasmic side; the sequence is MSGEGTDLPT…QWMNSNFKNH (263 aa). The span at 25–44 shows a compositional bias: polar residues; that stretch reads PGSSQQQLVPIAHTISSPSK. 4 stretches are compositionally biased toward basic and acidic residues: residues 119-133, 140-155, 174-194, and 204-214; these read RARE…EREN, RARD…ERSR, YFDD…KGMR, and SGEKVRRKSTD. The chain crosses the membrane as a helical span at residues 264 to 284; the sequence is FVATIGEFVGTTMFLFFAFAG. The Extracellular portion of the chain corresponds to 285–308; the sequence is TQVANIDSNTVNTTTGAATGFNIA. Asn-296 carries N-linked (GlcNAc...) asparagine glycosylation. The helical transmembrane segment at 309–329 threads the bilayer; sequence VQLYIAVIFGFSLMVNVWIFF. The Cytoplasmic portion of the chain corresponds to 330 to 332; it reads RIS. The chain crosses the membrane as a helical span at residues 333–353; the sequence is GGLFNPAVTLGMVLVGAIPIP. Residues 354 to 356 lie on the Extracellular side of the membrane; that stretch reads RAA. The helical transmembrane segment at 357 to 377 threads the bilayer; the sequence is CLFFAQILGGIAASGMVLGLF. Residues 378–393 lie on the Cytoplasmic side of the membrane; that stretch reads PTTFNVRTTLGASTST. The helical transmembrane segment at 394–414 threads the bilayer; that stretch reads VQGVFIEAILTAELVFTIFML. Over 415–420 the chain is Extracellular; it reads AKEKHK. The chain crosses the membrane as a helical span at residues 421-441; it reads ATFIAPVGIGLALFIAEMVGV. Topologically, residues 442–467 are cytoplasmic; that stretch reads YYTGGSLNPARSFGPCVVSGSFDKEH. The helical transmembrane segment at 468–488 threads the bilayer; sequence WIYWIGPITGTFIAVFFYKFI. Residues 489–540 lie on the Extracellular side of the membrane; it reads KMLEYEMANPGQDGDAKNDPTQNEKKREQILEERNRRYEKRNGSLRPGSRLS. Positions 499-540 are disordered; the sequence is GQDGDAKNDPTQNEKKREQILEERNRRYEKRNGSLRPGSRLS. Basic and acidic residues predominate over residues 502 to 530; that stretch reads GDAKNDPTQNEKKREQILEERNRRYEKRN. Residue Asn-530 is glycosylated (N-linked (GlcNAc...) asparagine).

It belongs to the MIP/aquaporin (TC 1.A.8) family.

It is found in the membrane. It carries out the reaction H2O(in) = H2O(out). Water channel required to facilitate the transport of water across membranes. May play a role in the vegetative growth. The polypeptide is Aquaporin-5 (Botryotinia fuckeliana (strain B05.10) (Noble rot fungus)).